Consider the following 416-residue polypeptide: 4-hydroxy-3-methylbut-2-en-1-yl diphosphate synthase (flavodoxin) (416 aa).

Residues C304, C307, C350, and E357 each coordinate [4Fe-4S] cluster.

It belongs to the IspG family. Requires [4Fe-4S] cluster as cofactor.

The enzyme catalyses (2E)-4-hydroxy-3-methylbut-2-enyl diphosphate + oxidized [flavodoxin] + H2O + 2 H(+) = 2-C-methyl-D-erythritol 2,4-cyclic diphosphate + reduced [flavodoxin]. Its pathway is isoprenoid biosynthesis; isopentenyl diphosphate biosynthesis via DXP pathway; isopentenyl diphosphate from 1-deoxy-D-xylulose 5-phosphate: step 5/6. Functionally, converts 2C-methyl-D-erythritol 2,4-cyclodiphosphate (ME-2,4cPP) into 1-hydroxy-2-methyl-2-(E)-butenyl 4-diphosphate. This chain is 4-hydroxy-3-methylbut-2-en-1-yl diphosphate synthase (flavodoxin), found in Allorhizobium ampelinum (strain ATCC BAA-846 / DSM 112012 / S4) (Agrobacterium vitis (strain S4)).